A 360-amino-acid chain; its full sequence is uncharacterized protein (360 aa).

A disordered region spans residues 193–245 (SRHTRPKGQPLSSPKKNSGSAARPSTAIGLCRRSQTPGALQSTGPSNTELEPE). Composition is skewed to polar residues over residues 202–212 (PLSSPKKNSGS) and 225–241 (RSQT…SNTE).

This is an uncharacterized protein from Homo sapiens (Human).